A 62-amino-acid chain; its full sequence is Large ribosomal subunit protein bL32 (62 aa).

Residues 1-19 are compositionally biased toward basic residues; the sequence is MAVPKRKTSKTRRDKRRAS. The interval 1–20 is disordered; sequence MAVPKRKTSKTRRDKRRASS.

This sequence belongs to the bacterial ribosomal protein bL32 family.

The polypeptide is Large ribosomal subunit protein bL32 (Finegoldia magna (strain ATCC 29328 / DSM 20472 / WAL 2508) (Peptostreptococcus magnus)).